A 191-amino-acid chain; its full sequence is MTVVLRLPRELRPELRRPWGTLYPRPSIKTYRRLHEESEVLITVGDMTTRSFLRCSIRPDVAVVDRKMLRTVPVDPGNKFPVTLDVNNPPGTITREAWDTVRRGIDYALDGDATLIDVTGEEDLLAIPAILIAPENSIVCYGLPGEGMVAARVTQHLKDSVLRLLTRFRGYDEWKSRSWISGITPCCTAKR.

Asp-46, Asp-65, Lys-67, and Glu-122 together coordinate GTP.

This sequence belongs to the GTP-dependent DPCK family.

The catalysed reaction is 3'-dephospho-CoA + GTP = GDP + CoA + H(+). The protein operates within cofactor biosynthesis; coenzyme A biosynthesis. Catalyzes the GTP-dependent phosphorylation of the 3'-hydroxyl group of dephosphocoenzyme A to form coenzyme A (CoA). The protein is GTP-dependent dephospho-CoA kinase of Methanopyrus kandleri (strain AV19 / DSM 6324 / JCM 9639 / NBRC 100938).